The following is a 414-amino-acid chain: Esterase FrsA (414 aa).

Belongs to the FrsA family.

It catalyses the reaction a carboxylic ester + H2O = an alcohol + a carboxylate + H(+). Functionally, catalyzes the hydrolysis of esters. This Escherichia coli O17:K52:H18 (strain UMN026 / ExPEC) protein is Esterase FrsA.